A 1349-amino-acid polypeptide reads, in one-letter code: DNA-directed RNA polymerase subunit beta' (1349 aa).

Positions 219, 293, 300, and 303 each coordinate Zn(2+). The tract at residues 1298 to 1349 is disordered; it reads LDSPTLGESGFGSRRAERSVLDDEDELIADEVVDDDDFEEEEEDDEDDFDDE. Acidic residues predominate over residues 1319–1349; it reads DDEDELIADEVVDDDDFEEEEEDDEDDFDDE.

The protein belongs to the RNA polymerase beta' chain family. RpoC2 subfamily. In cyanobacteria the RNAP catalytic core is composed of 2 alpha, 1 beta, 1 beta', 1 gamma and 1 omega subunit. When a sigma factor is associated with the core the holoenzyme is formed, which can initiate transcription. Requires Zn(2+) as cofactor.

The enzyme catalyses RNA(n) + a ribonucleoside 5'-triphosphate = RNA(n+1) + diphosphate. DNA-dependent RNA polymerase catalyzes the transcription of DNA into RNA using the four ribonucleoside triphosphates as substrates. The chain is DNA-directed RNA polymerase subunit beta' from Nostoc punctiforme (strain ATCC 29133 / PCC 73102).